A 113-amino-acid chain; its full sequence is Hydrogenase maturation factor HypA (113 aa).

Histidine 2 contacts Ni(2+). Residues cysteine 70, cysteine 73, cysteine 86, and cysteine 88 each contribute to the Zn(2+) site.

The protein belongs to the HypA/HybF family.

Its function is as follows. Involved in the maturation of [NiFe] hydrogenases. Required for nickel insertion into the metal center of the hydrogenase. The protein is Hydrogenase maturation factor HypA of Nostoc sp. (strain PCC 7120 / SAG 25.82 / UTEX 2576).